The sequence spans 142 residues: Hemoglobin subunit alpha-2 (142 aa).

One can recognise a Globin domain in the interval 2–142; that stretch reads VLSAADKTNV…VSTVLTSKYR (141 aa). His59 is a binding site for O2. His88 contributes to the heme b binding site.

Belongs to the globin family. Heterotetramer of two alpha chains and two beta chains. In terms of tissue distribution, red blood cells.

Its function is as follows. Involved in oxygen transport from the lung to the various peripheral tissues. Hemopressin acts as an antagonist peptide of the cannabinoid receptor CNR1. Hemopressin-binding efficiently blocks cannabinoid receptor CNR1 and subsequent signaling. The protein is Hemoglobin subunit alpha-2 (HBA2) of Equus quagga burchellii (Burchell's zebra).